The sequence spans 363 residues: UDP-N-acetylglucosamine--N-acetylmuramyl-(pentapeptide) pyrophosphoryl-undecaprenol N-acetylglucosamine transferase (363 aa).

Residues 16-18 (TGG), N128, R167, S195, I249, 268-273 (ALTVSE), and Q294 contribute to the UDP-N-acetyl-alpha-D-glucosamine site.

It belongs to the glycosyltransferase 28 family. MurG subfamily.

It localises to the cell inner membrane. The catalysed reaction is di-trans,octa-cis-undecaprenyl diphospho-N-acetyl-alpha-D-muramoyl-L-alanyl-D-glutamyl-meso-2,6-diaminopimeloyl-D-alanyl-D-alanine + UDP-N-acetyl-alpha-D-glucosamine = di-trans,octa-cis-undecaprenyl diphospho-[N-acetyl-alpha-D-glucosaminyl-(1-&gt;4)]-N-acetyl-alpha-D-muramoyl-L-alanyl-D-glutamyl-meso-2,6-diaminopimeloyl-D-alanyl-D-alanine + UDP + H(+). Its pathway is cell wall biogenesis; peptidoglycan biosynthesis. Cell wall formation. Catalyzes the transfer of a GlcNAc subunit on undecaprenyl-pyrophosphoryl-MurNAc-pentapeptide (lipid intermediate I) to form undecaprenyl-pyrophosphoryl-MurNAc-(pentapeptide)GlcNAc (lipid intermediate II). This chain is UDP-N-acetylglucosamine--N-acetylmuramyl-(pentapeptide) pyrophosphoryl-undecaprenol N-acetylglucosamine transferase, found in Marinobacter nauticus (strain ATCC 700491 / DSM 11845 / VT8) (Marinobacter aquaeolei).